We begin with the raw amino-acid sequence, 344 residues long: Lipopolysaccharide heptosyltransferase 3 (344 aa).

The protein belongs to the glycosyltransferase 9 family.

The catalysed reaction is an L-alpha-D-Hep-(1-&gt;3)-4-O-phospho-L-alpha-D-Hep-(1-&gt;5)-[alpha-Kdo-(2-&gt;4)]-alpha-Kdo-(2-&gt;6)-lipid A + ADP-L-glycero-beta-D-manno-heptose = an L-alpha-D-Hep-(1-&gt;7)-L-alpha-D-Hep-(1-&gt;3)-4-O-phospho-L-alpha-D-Hep-(1-&gt;5)-[alpha-Kdo-(2-&gt;4)]-alpha-Kdo-(2-&gt;6)-lipid A + ADP + H(+). The enzyme catalyses L-alpha-D-Hep-(1-&gt;3)-4-O-phospho-L-alpha-D-Hep-(1-&gt;5)-[alpha-Kdo-(2-&gt;4)]-alpha-Kdo-(2-&gt;6)-lipid A (E. coli) + ADP-L-glycero-beta-D-manno-heptose = L-alpha-D-Hep-(1-&gt;7)-L-alpha-D-Hep-(1-&gt;3)-4-O-phospho-L-alpha-D-Hep-(1-&gt;5)-[alpha-Kdo-(2-&gt;4)]-alpha-Kdo-(2-&gt;6)-lipid A (E. coli) + ADP + H(+). It functions in the pathway bacterial outer membrane biogenesis; LPS core biosynthesis. In terms of biological role, glycosyltransferase involved in the biosynthesis of the core oligosaccharide region of lipopolysaccharide (LPS). Catalyzes the addition of the third heptose unit (HepIII) to the second heptose unit (HepII) of the phospho-Hep2-Kdo2-lipid A module. The sequence is that of Lipopolysaccharide heptosyltransferase 3 from Escherichia coli (strain K12).